The sequence spans 260 residues: tRNA pseudouridine synthase A (260 aa).

Asp52 (nucleophile) is an active-site residue. Tyr111 provides a ligand contact to substrate.

The protein belongs to the tRNA pseudouridine synthase TruA family. In terms of assembly, homodimer.

The catalysed reaction is uridine(38/39/40) in tRNA = pseudouridine(38/39/40) in tRNA. Functionally, formation of pseudouridine at positions 38, 39 and 40 in the anticodon stem and loop of transfer RNAs. The polypeptide is tRNA pseudouridine synthase A (Roseobacter denitrificans (strain ATCC 33942 / OCh 114) (Erythrobacter sp. (strain OCh 114))).